Consider the following 277-residue polypeptide: Large ribosomal subunit protein uL2 (277 aa).

Residues 219–277 (TVRGSVMNPNDHPHGGGEGRSPIGHPSPRTPWGKPALGYKTRKNKKYSDRFIVKRRHDK) form a disordered region.

Belongs to the universal ribosomal protein uL2 family. As to quaternary structure, part of the 50S ribosomal subunit. Forms a bridge to the 30S subunit in the 70S ribosome.

Its function is as follows. One of the primary rRNA binding proteins. Required for association of the 30S and 50S subunits to form the 70S ribosome, for tRNA binding and peptide bond formation. It has been suggested to have peptidyltransferase activity; this is somewhat controversial. Makes several contacts with the 16S rRNA in the 70S ribosome. This chain is Large ribosomal subunit protein uL2, found in Clostridium botulinum (strain 657 / Type Ba4).